The primary structure comprises 453 residues: UPF0210 protein Mbar_A3181 (453 aa).

This sequence belongs to the UPF0210 family.

In Methanosarcina barkeri (strain Fusaro / DSM 804), this protein is UPF0210 protein Mbar_A3181.